Here is a 213-residue protein sequence, read N- to C-terminus: Thymidylate kinase (213 aa).

Residue 10 to 17 participates in ATP binding; it reads GLEGAGKT.

Belongs to the thymidylate kinase family.

It catalyses the reaction dTMP + ATP = dTDP + ADP. Functionally, phosphorylation of dTMP to form dTDP in both de novo and salvage pathways of dTTP synthesis. The sequence is that of Thymidylate kinase from Salmonella arizonae (strain ATCC BAA-731 / CDC346-86 / RSK2980).